The chain runs to 359 residues: tRNA-specific 2-thiouridylase MnmA (359 aa).

ATP is bound by residues 6-13 and leucine 32; that span reads AMSGGVDS. Cysteine 101 acts as the Nucleophile in catalysis. Cysteine 101 and cysteine 193 form a disulfide bridge. Residue glycine 125 participates in ATP binding. The tract at residues 143–145 is interaction with tRNA; the sequence is KDQ. Cysteine 193 acts as the Cysteine persulfide intermediate in catalysis.

Belongs to the MnmA/TRMU family.

The protein resides in the cytoplasm. The enzyme catalyses S-sulfanyl-L-cysteinyl-[protein] + uridine(34) in tRNA + AH2 + ATP = 2-thiouridine(34) in tRNA + L-cysteinyl-[protein] + A + AMP + diphosphate + H(+). Its function is as follows. Catalyzes the 2-thiolation of uridine at the wobble position (U34) of tRNA, leading to the formation of s(2)U34. This Mycobacterium sp. (strain KMS) protein is tRNA-specific 2-thiouridylase MnmA.